The primary structure comprises 873 residues: Probable inorganic carbon transporter subunit DabA (873 aa).

Zn(2+)-binding residues include Cys-393, Asp-395, His-575, and Cys-590.

Belongs to the inorganic carbon transporter (TC 9.A.2) DabA family. As to quaternary structure, forms a complex with DabB. Zn(2+) is required as a cofactor.

It is found in the cell membrane. Its function is as follows. Part of an energy-coupled inorganic carbon pump. The sequence is that of Probable inorganic carbon transporter subunit DabA from Bacillus licheniformis (strain ATCC 14580 / DSM 13 / JCM 2505 / CCUG 7422 / NBRC 12200 / NCIMB 9375 / NCTC 10341 / NRRL NRS-1264 / Gibson 46).